The sequence spans 212 residues: Uracil phosphoribosyltransferase (212 aa).

Residues R78, R103, and 130 to 138 (DPMLATGGS) contribute to the 5-phospho-alpha-D-ribose 1-diphosphate site. Residues I193 and 198-200 (GDA) each bind uracil. D199 contacts 5-phospho-alpha-D-ribose 1-diphosphate.

The protein belongs to the UPRTase family. Requires Mg(2+) as cofactor.

It carries out the reaction UMP + diphosphate = 5-phospho-alpha-D-ribose 1-diphosphate + uracil. It participates in pyrimidine metabolism; UMP biosynthesis via salvage pathway; UMP from uracil: step 1/1. With respect to regulation, allosterically activated by GTP. Its function is as follows. Catalyzes the conversion of uracil and 5-phospho-alpha-D-ribose 1-diphosphate (PRPP) to UMP and diphosphate. The polypeptide is Uracil phosphoribosyltransferase (Pseudomonas entomophila (strain L48)).